The primary structure comprises 477 residues: Protoporphyrinogen oxidase (477 aa).

FAD-binding positions include 9-14, tryptophan 42, 57-60, valine 257, alanine 449, and 454-456; these read GGGISG, GPRG, and VAV.

The protein belongs to the protoporphyrinogen/coproporphyrinogen oxidase family. Protoporphyrinogen oxidase subfamily. In terms of assembly, monomer. Homodimer. Requires FAD as cofactor.

It localises to the mitochondrion inner membrane. The catalysed reaction is protoporphyrinogen IX + 3 O2 = protoporphyrin IX + 3 H2O2. The protein operates within porphyrin-containing compound metabolism; protoporphyrin-IX biosynthesis; protoporphyrin-IX from protoporphyrinogen-IX: step 1/1. Its activity is regulated as follows. Inhibited by acifluorfen. Catalyzes the 6-electron oxidation of protoporphyrinogen-IX to form protoporphyrin-IX. The chain is Protoporphyrinogen oxidase (Ppox) from Mus musculus (Mouse).